A 277-amino-acid polypeptide reads, in one-letter code: Zinc transporter ZupT (277 aa).

8 helical membrane-spanning segments follow: residues 7–27 (VLLA…GSAI), 38–58 (FLAV…FVEI), 73–93 (VLAS…IAVI), 133–155 (AGVL…AFSA), 165–187 (AIAV…PIYY), 196–216 (FLYS…GYVV), 220–240 (FFTP…MVYI), and 257–277 (LCIL…LLFL). Fe(2+) contacts are provided by Asn-145 and Glu-148. 2 residues coordinate Zn(2+): Glu-148 and His-173. The Fe(2+) site is built by Asn-174, Glu-177, and Glu-206. Glu-177 contacts Zn(2+).

The protein belongs to the ZIP transporter (TC 2.A.5) family. ZupT subfamily.

It localises to the cell inner membrane. The enzyme catalyses Zn(2+)(in) = Zn(2+)(out). Its function is as follows. Mediates zinc uptake. May also transport other divalent cations. In Nitratidesulfovibrio vulgaris (strain ATCC 29579 / DSM 644 / CCUG 34227 / NCIMB 8303 / VKM B-1760 / Hildenborough) (Desulfovibrio vulgaris), this protein is Zinc transporter ZupT.